We begin with the raw amino-acid sequence, 586 residues long: Paxillin (586 aa).

At Met1 the chain carries N-acetylmethionine. Positions 3-15 (DLDALLADLESTT) match the LD motif 1 motif. The interval 13–138 (STTSHISKRP…PSPTVMSSSL (126 aa)) is disordered. Residue Tyr31 is modified to Phosphotyrosine; by PTK6. Residues 45-54 (VPPPVPPPPS) are compositionally biased toward pro residues. Residues Ser83 and Ser85 each carry the phosphoserine modification. Low complexity predominate over residues 86–98 (PIYSSSTKNSSAS). Tyr88 is modified (phosphotyrosine). Ser106 is subject to Phosphoserine. Phosphotyrosine; by PTK6 is present on Tyr118. Ser119, Ser126, and Ser130 each carry phosphoserine. Positions 121 to 137 (PNKQKSAEPSPTVMSSS) are enriched in polar residues. Residue Thr132 is modified to Phosphothreonine. Ser137, Ser140, and Ser143 each carry phosphoserine. The LD motif 2 signature appears at 144–156 (ELDRLLLELNAVQ). Tyr210 is subject to Phosphotyrosine. Positions 220–241 (GGKAGPLMKEKPKRNGGRGLED) are disordered. Residues 245–257 (SVESLLDELENSV) carry the LD motif 3 motif. Ser259 bears the Phosphoserine mark. The disordered stretch occupies residues 266-290 (VNQGEMSSPQRVTSSQQQTRISASS). Ser273 carries the phosphoserine; by CDK5 modification. Phosphoserine is present on residues Ser279, Ser287, Ser290, Ser301, Ser317, Ser327, and Ser335. Residues 291 to 310 (ATRELDELMASLSDFKFMAQ) are required for binding to PARVA and ILK. Residues 294–305 (ELDELMASLSDF) carry the LD motif 4 motif. Positions 309–329 (AQGKTGSSSPPGGLSKPGSQL) are disordered. Positions 310–329 (QGKTGSSSPPGGLSKPGSQL) are enriched in low complexity. An LD motif 5 motif is present at residues 328–340 (QLDSMLGSLQSDL). LIM zinc-binding domains follow at residues 353–403 (CGAC…CEKD), 412–462 (CYYC…CRKD), and 471–521 (CGGC…CEVH). Residue Ser528 is modified to Phosphoserine. The region spanning 530–580 (CSGCQKPITGRCITAMAKKFHPEHFVCAFCLKQLNKGTFKEQNDKPYCQSC) is the LIM zinc-binding 4 domain.

It belongs to the paxillin family. Interacts in vitro with VCL/vinculin as well as to the SH3 domain of SRC and, when tyrosine phosphorylated, to the SH2 domain of CRK. Interacts with GIT1. Interacts with NUDT16L1/SDOS. Interacts with PTK2/FAK1. Interacts with PTK2B/PYK2. Interacts with ASAP2. Interacts with unphosphorylated ITGA4. Interacts with RNF5. Interacts with PDCD10. Interacts with NEK3, the interaction is prolactin-dependent. Interacts with PTK6. Interacts with TGFB1I1. Interacts with SORBS1. Interacts with PARVB. Interacts (via LD motif 4) with PARVA/PARVIN. Interacts (via LD motif 4) with ILK. Interacts (via cytoplasmic domain) with CEACAM1; the interaction is phosphotyrosyl-dependent. Interacts with LIMA1; this complex stabilizes actin dynamics. Interacts with CD36 (via C-terminus). Interacts with TRIM15. Interacts with PAK4; PAK4 acts as a scaffold to suppport PAXI phosphorylation at Ser-301. Post-translationally, phosphorylated by MAPK1/ERK2. Phosphorylated on tyrosine residues during integrin-mediated cell adhesion, embryonic development, fibroblast transformation and following stimulation of cells by mitogens. Phosphorylation at Ser-273 by CDK5 reduces its interaction with PTK2/FAK1 in matrix-cell focal adhesions (MCFA) during oligodendrocytes (OLs) differentiation. Phosphorylation at Tyr-31 and Tyr-118 by PTK6 promote the activation of RAC1 via CRK/CrKII, thereby promoting migration and invasion. Phosphorylation at Ser-279 by SLK is required for PXN redistribution and cell motility. Phosphorylation at Ser-301 promotes focal adhesion disassembly during cell migration.

It is found in the cytoplasm. Its subcellular location is the cytoskeleton. The protein resides in the cell junction. It localises to the focal adhesion. The protein localises to the cell cortex. In terms of biological role, cytoskeletal protein involved in actin-membrane attachment at sites of cell adhesion to the extracellular matrix (focal adhesion). Recruits other proteins such as TRIM15 to focal adhesion. The polypeptide is Paxillin (Rattus norvegicus (Rat)).